We begin with the raw amino-acid sequence, 456 residues long: Alcohol acyltransferase 1 (456 aa).

Residues His-166 and Asp-382 each act as proton acceptor in the active site.

It belongs to the plant acyltransferase family.

Functionally, involved in the biosynthesis of volatile esters which confer kiwifruit flavor. Alcohol acyl transferase that can use a wide range of alcohols as substrate to produce esters. The sequence is that of Alcohol acyltransferase 1 from Actinidia chinensis var. chinensis (Chinese soft-hair kiwi).